The chain runs to 155 residues: Riboflavin kinase (155 aa).

ATP is bound by residues Gly-15, Lys-21, Thr-27, and Asn-29. Thr-27 and Asn-29 together coordinate Mg(2+). Catalysis depends on Glu-79, which acts as the Nucleophile. Ile-82, His-84, and Tyr-91 together coordinate ATP. Residues Arg-104, Lys-107, and Phe-109 each contribute to the FMN site.

As to quaternary structure, monomer. Directly interacts with TNFRSF1A death domain; this interaction may be supported by TRADD. In the absence of TNFRSF1A, interacts with TRADD. Independently of TNFRSF1A, interacts with the NADPH oxidase subunit CYBA. Zn(2+) serves as cofactor. Requires Mg(2+) as cofactor.

It localises to the cytoplasm. The catalysed reaction is riboflavin + ATP = FMN + ADP + H(+). It functions in the pathway cofactor biosynthesis; FMN biosynthesis; FMN from riboflavin (ATP route): step 1/1. In terms of biological role, catalyzes the phosphorylation of riboflavin (vitamin B2) to form flavin-mononucleotide (FMN), hence rate-limiting enzyme in the synthesis of FAD. Essential for TNF-induced reactive oxygen species (ROS) production. Through its interaction with both TNFRSF1A and CYBA, physically and functionally couples TNFRSF1A to NADPH oxidase. TNF-activation of RFK may enhance the incorporation of FAD in NADPH oxidase, a critical step for the assembly and activation of NADPH oxidase. The sequence is that of Riboflavin kinase (Rfk) from Mus musculus (Mouse).